Here is a 147-residue protein sequence, read N- to C-terminus: Insertion element IS402 uncharacterized 16.2 kDa protein (147 aa).

The interval 106–147 (DSSSIRAVGAGQKLGQTPPIARDPVPSTTSSPTPTVRRSPRS) is disordered. The span at 129–147 (PVPSTTSSPTPTVRRSPRS) shows a compositional bias: low complexity.

This sequence belongs to the transposase 6 family.

The protein is Insertion element IS402 uncharacterized 16.2 kDa protein of Burkholderia cepacia (Pseudomonas cepacia).